A 156-amino-acid polypeptide reads, in one-letter code: 3-dehydroquinate dehydratase (156 aa).

Tyrosine 22 functions as the Proton acceptor in the catalytic mechanism. Substrate contacts are provided by asparagine 73, histidine 79, and aspartate 86. The active-site Proton donor is the histidine 99. Substrate contacts are provided by residues 100 to 101 and arginine 110; that span reads LS.

Belongs to the type-II 3-dehydroquinase family. Homododecamer.

It carries out the reaction 3-dehydroquinate = 3-dehydroshikimate + H2O. It participates in metabolic intermediate biosynthesis; chorismate biosynthesis; chorismate from D-erythrose 4-phosphate and phosphoenolpyruvate: step 3/7. Its function is as follows. Catalyzes a trans-dehydration via an enolate intermediate. This Nitratiruptor sp. (strain SB155-2) protein is 3-dehydroquinate dehydratase.